The primary structure comprises 208 residues: Outer-membrane lipoprotein carrier protein (208 aa).

Residues 1–21 (MKRTATLLVVALILALNTAQA) form the signal peptide.

This sequence belongs to the LolA family. Monomer.

The protein resides in the periplasm. In terms of biological role, participates in the translocation of lipoproteins from the inner membrane to the outer membrane. Only forms a complex with a lipoprotein if the residue after the N-terminal Cys is not an aspartate (The Asp acts as a targeting signal to indicate that the lipoprotein should stay in the inner membrane). This chain is Outer-membrane lipoprotein carrier protein, found in Halorhodospira halophila (strain DSM 244 / SL1) (Ectothiorhodospira halophila (strain DSM 244 / SL1)).